The chain runs to 407 residues: Probable acyl-CoA dehydrogenase FadE2 (407 aa).

Belongs to the acyl-CoA dehydrogenase family. FAD is required as a cofactor.

The enzyme catalyses a 2,3-saturated acyl-CoA + A = a 2,3-dehydroacyl-CoA + AH2. The protein is Probable acyl-CoA dehydrogenase FadE2 of Mycobacterium tuberculosis (strain ATCC 25618 / H37Rv).